A 258-amino-acid polypeptide reads, in one-letter code: Mediator of RNA polymerase II transcription subunit 18 (258 aa).

This sequence belongs to the Mediator complex subunit 18 family. Component of the Mediator complex.

It is found in the nucleus. In terms of biological role, component of the Mediator complex, a coactivator involved in the regulated transcription of nearly all RNA polymerase II-dependent genes. Mediator functions as a bridge to convey information from gene-specific regulatory proteins to the basal RNA polymerase II transcription machinery. Mediator is recruited to promoters by direct interactions with regulatory proteins and serves as a scaffold for the assembly of a functional preinitiation complex with RNA polymerase II and the general transcription factors. In Eremothecium gossypii (strain ATCC 10895 / CBS 109.51 / FGSC 9923 / NRRL Y-1056) (Yeast), this protein is Mediator of RNA polymerase II transcription subunit 18 (SRB5).